Reading from the N-terminus, the 355-residue chain is Elongation factor Ts, mitochondrial (355 aa).

The N-terminal 46 residues, 1-46, are a transit peptide targeting the mitochondrion; it reads MIRSLNFALRNCNKNILINSNKITINNGLLLKKNNFCTQSTSEVKV.

It belongs to the EF-Ts family.

The protein localises to the mitochondrion. In terms of biological role, associates with the EF-Tu.GDP complex and induces the exchange of GDP to GTP. It remains bound to the aminoacyl-tRNA.EF-Tu.GTP complex up to the GTP hydrolysis stage on the ribosome. The polypeptide is Elongation factor Ts, mitochondrial (tsfm) (Dictyostelium discoideum (Social amoeba)).